The primary structure comprises 245 residues: PF03932 family protein CutC (245 aa).

This sequence belongs to the CutC family.

Its subcellular location is the cytoplasm. This is PF03932 family protein CutC from Rhizobium meliloti (strain 1021) (Ensifer meliloti).